A 1192-amino-acid chain; its full sequence is DNA topoisomerase 2 (1192 aa).

Residues Asn-64, Asn-95, and 142–149 (GTNGVGLK) each bind ATP. Residues Glu-438, Asp-539, and Asp-541 each contribute to the Mg(2+) site. Residues 707–1174 (IPNFLDGMTR…PGASVWLEEI (468 aa)) enclose the Topo IIA-type catalytic domain. Catalysis depends on Tyr-800, which acts as the O-(5'-phospho-DNA)-tyrosine intermediate.

Belongs to the type II topoisomerase family. Mg(2+) is required as a cofactor. It depends on Mn(2+) as a cofactor. Ca(2+) serves as cofactor.

It localises to the host cytoplasm. It carries out the reaction ATP-dependent breakage, passage and rejoining of double-stranded DNA.. Functionally, type II topoisomerase. Processively relaxes supercoiled DNA. Displays DNA-supercoiling activity only when associated with the viral histone-like protein. The polypeptide is DNA topoisomerase 2 (Ornithodoros (relapsing fever ticks)).